A 1103-amino-acid chain; its full sequence is Coatomer subunit beta (1103 aa).

HEAT repeat units lie at residues 51–89, 94–129, 130–166, 247–284, 322–359, 365–404, and 405–441; these read EAYTRLLMTVIRYAMPSKDKRVKKLTQLYLEIVGKCRPD, EEMILICNALRNDLMSPNEYVRGSTLRLLSKIRQFK, VLEPLVEAILQNLTHRHSYVRRNAVMCVYSIVKNFGL, QQKAGLLRLIVSILPNTLPSVAYEGACSLLALSRAPVS, RTMEEFVIDLLRGLQTPSLEVRRKILDLVLQIVGKNSV, VLKRELLRTAEPEQLTVPRTMEYRRLLIKAVHSCCTRFPE, and AAASVVNVLIDFPGDPDVTTATEVAVVVRELVATCVH.

Oligomeric complex that consists of at least the alpha, beta, beta', gamma, delta, epsilon and zeta subunits.

The protein resides in the cytoplasm. It is found in the golgi apparatus membrane. Its subcellular location is the cytoplasmic vesicle. It localises to the COPI-coated vesicle membrane. Functionally, the coatomer is a cytosolic protein complex that binds to dilysine motifs and reversibly associates with Golgi non-clathrin-coated vesicles, which further mediate biosynthetic protein transport from the ER, via the Golgi up to the trans Golgi network. Coatomer complex is required for budding from Golgi membranes, and is essential for the retrograde Golgi-to-ER transport of dilysine-tagged proteins. This chain is Coatomer subunit beta, found in Toxoplasma gondii.